A 242-amino-acid polypeptide reads, in one-letter code: D-proline reductase subunit gamma (242 aa).

Sec152 (nucleophile) is an active-site residue. Position 152 (Sec152) is a non-standard amino acid, selenocysteine.

As to quaternary structure, consists of 3 subunits of 23, 26 and 45 kDa (alpha, gamma and beta respectively). The molecular weight of the complex is approximately 870 kDa, suggesting a decameric structure, if all 3 subunits are present in equal stoichiometry. In terms of processing, this subunit is carbonylated in vitro on an unidentified residue.

It is found in the cytoplasm. The catalysed reaction is [PrdC protein]-Se-L-selenocysteinyl-S-L-cysteine + 5-aminopentanoate = [PrdC protein]-L-selenocysteine/L-cysteine + D-proline. Its function is as follows. D-proline reductase catalyzes the reductive cleavage of a C-N bond in D-proline resulting in the formation of 5-aminovalerate. The alpha subunit has been shown to bind D-proline, presumably via the pyruvoyl group. This Acetoanaerobium sticklandii (strain ATCC 12662 / DSM 519 / JCM 1433 / CCUG 9281 / NCIMB 10654 / HF) (Clostridium sticklandii) protein is D-proline reductase subunit gamma (prdB).